The primary structure comprises 506 residues: uncharacterized protein (506 aa).

Disordered stretches follow at residues 104–144 (PNSS…ATSS) and 397–456 (QQQK…DQLP). The segment covering 130–144 (ESSPTLSSSSLATSS) has biased composition (low complexity). Residues 405 to 443 (IKDEDKNEKENKSENEEKEKEKEKEKEKEKEKEKEKEKE) are compositionally biased toward basic and acidic residues. Residues 405–455 (IKDEDKNEKENKSENEEKEKEKEKEKEKEKEKEKEKEKENEEGEEDNGDQL) adopt a coiled-coil conformation.

This is an uncharacterized protein from Dictyostelium discoideum (Social amoeba).